A 793-amino-acid chain; its full sequence is Splicing factor 3A subunit 1 (793 aa).

The tract at residues 1-43 is disordered; that stretch reads MPAGPVQAVPPPPPVPTEPKQPTEEEASSKEDSAPSKPVVGII. Pro residues predominate over residues 8–19; the sequence is AVPPPPPVPTEP. Lys-20 participates in a covalent cross-link: Glycyl lysine isopeptide (Lys-Gly) (interchain with G-Cter in SUMO2). Positions 21 to 34 are enriched in basic and acidic residues; sequence QPTEEEASSKEDSA. One copy of the SURP motif 1 repeat lies at 52–94; the sequence is IVDKTASFVARNGPEFEARIRQNEINNPKFNFLNPNDPYHAYY. Lys-55 carries the N6-acetyllysine modification. Lys-131 participates in a covalent cross-link: Glycyl lysine isopeptide (Lys-Gly) (interchain with G-Cter in SUMO2). The stretch at 166–208 is one SURP motif 2 repeat; that stretch reads VVKLTAQFVARNGRQFLTQLMQKEQRNYQFDFLRPQHSLFNYF. Residues 318–428 form a disordered region; that stretch reads GESEEVEMEV…KIPASKMQEH (111 aa). 3 positions are modified to phosphoserine: Ser-320, Ser-329, and Ser-359. Composition is skewed to acidic residues over residues 320 to 334 and 354 to 364; these read SEEV…EEDD and DMDEGSDDEEE. The span at 368–384 shows a compositional bias: pro residues; the sequence is VPPPPETPMPPPLPPTP. The span at 388–397 shows a compositional bias: basic and acidic residues; that stretch reads IVRKDYDPKA. Ser-413 is subject to Phosphoserine. Lys-424 is covalently cross-linked (Glycyl lysine isopeptide (Lys-Gly) (interchain with G-Cter in SUMO2)). Residue Ser-451 is modified to Phosphoserine. Position 456 is a phosphotyrosine (Tyr-456). Residues 488-502 are compositionally biased toward basic and acidic residues; the sequence is IGEEEIQKPEEKVTW. Disordered regions lie at residues 488-518, 530-584, and 665-688; these read IGEE…AAQA, HKAK…TMPP, and APMP…LKTE. Lys-499 is covalently cross-linked (Glycyl lysine isopeptide (Lys-Gly) (interchain with G-Cter in SUMO2)). A Phosphoserine modification is found at Ser-508. Polar residues predominate over residues 509-518; sequence MARTQQAAQA. Lys-542 is covalently cross-linked (Glycyl lysine isopeptide (Lys-Gly) (interchain with G-Cter in SUMO2)). The span at 665–675 shows a compositional bias: pro residues; that stretch reads APMPPVHPPPP. The required and sufficient for nuclear import stretch occupies residues 680–702; sequence PTSKKLKTEDSLMPEEEFLRRNK. Lys-686 participates in a covalent cross-link: Glycyl lysine isopeptide (Lys-Gly) (interchain with G-Cter in SUMO2). The Ubiquitin-like domain occupies 707 to 793; it reads IKVQVPNMQD…ALKERGGRKK (87 aa). Tyr-759 is subject to Phosphotyrosine.

In terms of assembly, component of the 17S U2 SnRNP complex, a ribonucleoprotein complex that contains small nuclear RNA (snRNA) U2 and a number of specific proteins. Part of the SF3A subcomplex of the 17S U2 SnRNP complex which is composed of three subunits; SF3A3/SAP61, SF3A2/SAP62 and SF3A1/SAP114. SF3A associates with the splicing factor SF3B and a 12S RNA unit to form the mature 17S U2 small nuclear ribonucleoprotein complex (17S U2 snRNP). SF3A1 functions as a scaffold that interacts directly with both SF3A2 and SF3A3. Identified in the spliceosome 'E' complex, a precursor of the spliceosome 'A' complex. Identified in the spliceosome 'A' and 'B' complexes. Identified in the spliceosome 'C' complex. Interacts with P2RX6; resulting in a reduction of the splicing activity. In terms of tissue distribution, ubiquitously expressed.

Its subcellular location is the nucleus. The protein localises to the nucleus speckle. Component of the 17S U2 SnRNP complex of the spliceosome, a large ribonucleoprotein complex that removes introns from transcribed pre-mRNAs. The 17S U2 SnRNP complex (1) directly participates in early spliceosome assembly and (2) mediates recognition of the intron branch site during pre-mRNA splicing by promoting the selection of the pre-mRNA branch-site adenosine, the nucleophile for the first step of splicing. Within the 17S U2 SnRNP complex, SF3A1 is part of the SF3A subcomplex that contributes to the assembly of the 17S U2 snRNP, and the subsequent assembly of the pre-spliceosome 'E' complex and the pre-catalytic spliceosome 'A' complex. Involved in pre-mRNA splicing as a component of pre-catalytic spliceosome 'B' complexes. The chain is Splicing factor 3A subunit 1 (SF3A1) from Homo sapiens (Human).